A 202-amino-acid polypeptide reads, in one-letter code: Tumor necrosis factor alpha-induced protein 8-like protein 3 (202 aa).

Residues 1-10 (MDTDSGDLSE) are compositionally biased toward acidic residues. The tract at residues 1-24 (MDTDSGDLSEGELSPGPEQFSSKS) is disordered.

It belongs to the TNFAIP8 family.

It localises to the cytoplasm. The protein resides in the cell membrane. May act as a lipid transfer protein. The protein is Tumor necrosis factor alpha-induced protein 8-like protein 3 (tnfaip8l3) of Xenopus laevis (African clawed frog).